Here is a 584-residue protein sequence, read N- to C-terminus: uncharacterized protein (584 aa).

11 PbH1 repeats span residues 100-128, 139-161, 173-195, 196-225, 236-266, 313-333, 334-356, 357-382, 406-427, 456-478, and 529-554; these read QENI…RSTH, CSNV…IVSP, SEQI…SITG, CDMV…DIEG, PINV…LIEG, TSDA…IDVR, GKSV…LVYQ, SSDV…GLRA, GGNM…WIAQ, NAGA…YCST, and SAGS…QTNT.

This is an uncharacterized protein from Bacillus subtilis (strain 168).